The sequence spans 64 residues: Large ribosomal subunit protein bL35 (64 aa).

A disordered region spans residues 19–44; it reads TGKLKASRPGRRHKLTGKTPKRKRQL. Basic residues predominate over residues 23–44; that stretch reads KASRPGRRHKLTGKTPKRKRQL.

This sequence belongs to the bacterial ribosomal protein bL35 family.

The protein is Large ribosomal subunit protein bL35 of Protochlamydia amoebophila (strain UWE25).